The chain runs to 228 residues: Peptide deformylase (228 aa).

Disordered stretches follow at residues 1–28 and 116–138; these read MSQD…EGAV and GVPK…EPDR. Composition is skewed to polar residues over residues 8–18 and 123–133; these read TGCNTHSNTHS and NKQQANNSTSC. Fe cation-binding residues include Cys141 and His183. Glu184 is a catalytic residue. His187 serves as a coordination point for Fe cation.

This sequence belongs to the polypeptide deformylase family. It depends on Fe(2+) as a cofactor.

It catalyses the reaction N-terminal N-formyl-L-methionyl-[peptide] + H2O = N-terminal L-methionyl-[peptide] + formate. Removes the formyl group from the N-terminal Met of newly synthesized proteins. Requires at least a dipeptide for an efficient rate of reaction. N-terminal L-methionine is a prerequisite for activity but the enzyme has broad specificity at other positions. This Tropheryma whipplei (strain Twist) (Whipple's bacillus) protein is Peptide deformylase.